A 263-amino-acid chain; its full sequence is Type II restriction enzyme TaqI (263 aa).

Only 15% of purified enzyme (upon expression in E.coli) can be sequenced, suggesting the remainder has a blocked N-terminus.

It catalyses the reaction Endonucleolytic cleavage of DNA to give specific double-stranded fragments with terminal 5'-phosphates.. In terms of biological role, a P subtype restriction enzyme that recognizes the double-stranded sequence 5'-TCGA-3' and cleaves after T-1. This chain is Type II restriction enzyme TaqI (taqIR), found in Thermus aquaticus.